The sequence spans 437 residues: GTPase HflX (437 aa).

A disordered region spans residues 150–173 (DRQGGGSGGGKGGGGAARGEGEKQ). Residues 152–167 (QGGGSGGGKGGGGAAR) are compositionally biased toward gly residues. The region spanning 212-382 (ATAAIVGYTN…ACVEMLESRV (171 aa)) is the Hflx-type G domain. Residues 218–225 (GYTNAGKS), 243–247 (FATLD), 265–268 (DTVG), 331–334 (NKVD), and 360–362 (SVK) each bind GTP. Positions 225 and 245 each coordinate Mg(2+).

The protein belongs to the TRAFAC class OBG-HflX-like GTPase superfamily. HflX GTPase family. As to quaternary structure, monomer. Associates with the 50S ribosomal subunit. Mg(2+) is required as a cofactor.

The protein localises to the cytoplasm. Its function is as follows. GTPase that associates with the 50S ribosomal subunit and may have a role during protein synthesis or ribosome biogenesis. In Akkermansia muciniphila (strain ATCC BAA-835 / DSM 22959 / JCM 33894 / BCRC 81048 / CCUG 64013 / CIP 107961 / Muc), this protein is GTPase HflX.